We begin with the raw amino-acid sequence, 337 residues long: tRNA N6-adenosine threonylcarbamoyltransferase (337 aa).

Fe cation is bound by residues His111 and His115. Substrate is bound by residues 134–138 (LVSGG), Asp167, Gly180, and Asn272. Asp300 is a binding site for Fe cation.

The protein belongs to the KAE1 / TsaD family. Requires Fe(2+) as cofactor.

It localises to the cytoplasm. The catalysed reaction is L-threonylcarbamoyladenylate + adenosine(37) in tRNA = N(6)-L-threonylcarbamoyladenosine(37) in tRNA + AMP + H(+). In terms of biological role, required for the formation of a threonylcarbamoyl group on adenosine at position 37 (t(6)A37) in tRNAs that read codons beginning with adenine. Is involved in the transfer of the threonylcarbamoyl moiety of threonylcarbamoyl-AMP (TC-AMP) to the N6 group of A37, together with TsaE and TsaB. TsaD likely plays a direct catalytic role in this reaction. The chain is tRNA N6-adenosine threonylcarbamoyltransferase from Escherichia coli O127:H6 (strain E2348/69 / EPEC).